A 375-amino-acid chain; its full sequence is Patatin-1-Kuras 2 (375 aa).

A signal peptide spans 1–11 (MILATTSSTFA). The PNPLA domain maps to 20 to 218 (LSIDGGGIKG…TVADPALLSV (199 aa)). The GXGXXG signature appears at 24-29 (GGGIKG). The short motif at 63–67 (GTSTG) is the GXSXG element. Serine 65 functions as the Nucleophile in the catalytic mechanism. An N-linked (GlcNAc...) asparagine glycan is attached at asparagine 103. Aspartate 204 (proton acceptor) is an active-site residue. A DGA/G motif is present at residues 204-206 (DGA). Residues 349 to 373 (ETYEEALKRFAKLLSDRKKLRANKA) are a coiled coil.

The protein belongs to the patatin family. In terms of tissue distribution, tuber.

It is found in the vacuole. In terms of biological role, probable lipolytic acyl hydrolase (LAH), an activity which is thought to be involved in the response of tubers to pathogens. The polypeptide is Patatin-1-Kuras 2 (pat1-k2) (Solanum tuberosum (Potato)).